The primary structure comprises 267 residues: Large ribosomal subunit protein uL4 (267 aa).

This sequence belongs to the universal ribosomal protein uL4 family. Part of the 50S ribosomal subunit.

Functionally, one of the primary rRNA binding proteins, this protein initially binds near the 5'-end of the 23S rRNA. It is important during the early stages of 50S assembly. It makes multiple contacts with different domains of the 23S rRNA in the assembled 50S subunit and ribosome. Forms part of the polypeptide exit tunnel. The sequence is that of Large ribosomal subunit protein uL4 from Saccharolobus solfataricus (strain ATCC 35092 / DSM 1617 / JCM 11322 / P2) (Sulfolobus solfataricus).